Consider the following 425-residue polypeptide: SWI/SNF and RSC complexes subunit ssr3 (425 aa).

Polar residues predominate over residues 1–16 (MSNNSRLPENGVQSGN). Residues 1–23 (MSNNSRLPENGVQSGNGEDAELK) are disordered. Residues 201 to 278 (EHPERYKLSK…PELMNRFLEP (78 aa)) form the SWIB/MDM2 domain.

This sequence belongs to the SMARCD family. In terms of assembly, component of the RSC complex composed of at least arp9, arp42, rsc1, rsc4, rsc7, rsc9, rsc58, sfh1, snf21, ssr1, ssr2, ssr3 and ssr4. The complex interacts with histone and histone variant components of centromeric chromatin. Component of the SWI/SNF global transcription activator complex composed of at least arp9, arp42, snf5, snf22, snf30, sbf59, sol1, ssr1, ssr2, ssr3, ssr4 and tfg3.

Its subcellular location is the cytoplasm. It localises to the nucleus. Functionally, component of the chromatin structure remodeling complex (RSC), which is involved in transcription regulation and nucleosome positioning. Controls particularly membrane and organelle development genes. Part of the SWI/SNF complex, an ATP-dependent chromatin remodeling complex, required for the positive and negative regulation of gene expression of a large number of genes. It changes chromatin structure by altering DNA-histone contacts within a nucleosome, leading eventually to a change in nucleosome position, thus facilitating or repressing binding of gene-specific transcription factors. The chain is SWI/SNF and RSC complexes subunit ssr3 (ssr3) from Schizosaccharomyces pombe (strain 972 / ATCC 24843) (Fission yeast).